A 112-amino-acid polypeptide reads, in one-letter code: UPF0102 protein Spea_0251 (112 aa).

It belongs to the UPF0102 family.

This is UPF0102 protein Spea_0251 from Shewanella pealeana (strain ATCC 700345 / ANG-SQ1).